Consider the following 407-residue polypeptide: MQIYLVGGAVRDSLLNIDVKDKDWVVVGSTPTHMNSLGYQSVGQDFPVFLHPRTKEEYALARTERKSGQGYKGFTCYAEADVTLEEDLLRRDLTINAIAQSDKGLLIDPYHGQEDLKNRLLRHVSNAFVEDPLRVLRVARFAARFHYLGFTIAPETMQLMKTLVSSGELSHLTPERVWQEWEKSLSSKHPNIFLSVLKECGALAVVLPEIDALFGVPQPEQWHPEIDTGMHTLMVSQQASLLSTSLPIRFAAQVHDLGKGITPESEWPSHKMHCHTGIKVIKNLCKRVRVPNEYKELALLVCEHHTNVHRASELRAQTFIKIFDKMDLWRKPERLESILLCCQADHAGRLGLELNPYPQKERMESAFNAAQHVEVKEVVAAGFKGPEIRDELTKRRIEAVKVALLIN.

Residues glycine 8 and arginine 11 each coordinate ATP. CTP-binding residues include glycine 8 and arginine 11. 2 residues coordinate Mg(2+): aspartate 21 and aspartate 23. Residues arginine 91, arginine 137, and arginine 140 each contribute to the ATP site. CTP-binding residues include arginine 91, arginine 137, and arginine 140. The 102-residue stretch at 228–329 folds into the HD domain; sequence TGMHTLMVSQ…IKIFDKMDLW (102 aa).

It belongs to the tRNA nucleotidyltransferase/poly(A) polymerase family. Bacterial CCA-adding enzyme type 1 subfamily. In terms of assembly, monomer. Can also form homodimers and oligomers. Mg(2+) serves as cofactor. Requires Ni(2+) as cofactor.

The catalysed reaction is a tRNA precursor + 2 CTP + ATP = a tRNA with a 3' CCA end + 3 diphosphate. It carries out the reaction a tRNA with a 3' CCA end + 2 CTP + ATP = a tRNA with a 3' CCACCA end + 3 diphosphate. Catalyzes the addition and repair of the essential 3'-terminal CCA sequence in tRNAs without using a nucleic acid template. Adds these three nucleotides in the order of C, C, and A to the tRNA nucleotide-73, using CTP and ATP as substrates and producing inorganic pyrophosphate. tRNA 3'-terminal CCA addition is required both for tRNA processing and repair. Also involved in tRNA surveillance by mediating tandem CCA addition to generate a CCACCA at the 3' terminus of unstable tRNAs. While stable tRNAs receive only 3'-terminal CCA, unstable tRNAs are marked with CCACCA and rapidly degraded. The protein is Multifunctional CCA protein of Aliivibrio salmonicida (strain LFI1238) (Vibrio salmonicida (strain LFI1238)).